The sequence spans 1014 residues: Probable sucrose-phosphate synthase 5 (1014 aa).

Composition is skewed to basic and acidic residues over residues 29–41 (RRLEQELGSREAA) and 49–58 (EGEKDGKPDT). 2 disordered regions span residues 29 to 108 (RRLE…SDEE) and 648 to 677 (QLLRVPPSPSSSSAAAAAAGGGGAAASSEP).

This sequence belongs to the glycosyltransferase 1 family. Homodimer or homotetramer. In terms of tissue distribution, expressed in germinating seeds.

It carries out the reaction beta-D-fructose 6-phosphate + UDP-alpha-D-glucose = sucrose 6(F)-phosphate + UDP + H(+). The protein operates within glycan biosynthesis; sucrose biosynthesis; sucrose from D-fructose 6-phosphate and UDP-alpha-D-glucose: step 1/2. With respect to regulation, activity is regulated by phosphorylation and moderated by concentration of metabolites and light. Its function is as follows. Plays a role in photosynthetic sucrose synthesis by catalyzing the rate-limiting step of sucrose biosynthesis from UDP-glucose and fructose- 6-phosphate. Involved in the regulation of carbon partitioning in the leaves of plants. May regulate the synthesis of sucrose and therefore play a major role as a limiting factor in the export of photoassimilates out of the leaf. Plays a role for sucrose availability that is essential for plant growth and fiber elongation. The chain is Probable sucrose-phosphate synthase 5 (SPS5) from Oryza sativa subsp. japonica (Rice).